A 372-amino-acid chain; its full sequence is Glutamate 5-kinase (372 aa).

Lys-14 contributes to the ATP binding site. The substrate site is built by Ser-54, Asp-141, and Asn-153. ATP-binding positions include 173-174 and 215-221; these read TD and TGGMATK. In terms of domain architecture, PUA spans 280 to 358; that stretch reads RGQLVIDAGA…DSIEEVLGYD (79 aa).

Belongs to the glutamate 5-kinase family.

It localises to the cytoplasm. The catalysed reaction is L-glutamate + ATP = L-glutamyl 5-phosphate + ADP. Its pathway is amino-acid biosynthesis; L-proline biosynthesis; L-glutamate 5-semialdehyde from L-glutamate: step 1/2. Catalyzes the transfer of a phosphate group to glutamate to form L-glutamate 5-phosphate. The sequence is that of Glutamate 5-kinase from Shewanella pealeana (strain ATCC 700345 / ANG-SQ1).